The following is a 1063-amino-acid chain: DNA-directed RNA polymerase subunit beta (1063 aa).

This sequence belongs to the RNA polymerase beta chain family. In plastids the minimal PEP RNA polymerase catalytic core is composed of four subunits: alpha, beta, beta', and beta''. When a (nuclear-encoded) sigma factor is associated with the core the holoenzyme is formed, which can initiate transcription.

The protein localises to the plastid. It localises to the chloroplast. It catalyses the reaction RNA(n) + a ribonucleoside 5'-triphosphate = RNA(n+1) + diphosphate. In terms of biological role, DNA-dependent RNA polymerase catalyzes the transcription of DNA into RNA using the four ribonucleoside triphosphates as substrates. This is DNA-directed RNA polymerase subunit beta from Zygnema circumcarinatum (Green alga).